The primary structure comprises 520 residues: Transactivator/viroplasmin protein (520 aa).

Disordered stretches follow at residues 32–51 (GSSQ…KEEA) and 487–520 (QDAS…KQVD). Over residues 40–51 (SLHRETPEKEEA) the composition is skewed to basic and acidic residues.

The protein belongs to the caulimoviridae viroplasmin family.

The protein resides in the host cytoplasm. In terms of biological role, enhances the ribosomal termination-reinitiation event leading to the translation of major open reading frames on the polycistronic viral RNAs. This is Transactivator/viroplasmin protein from Arabidopsis thaliana (Mouse-ear cress).